A 262-amino-acid chain; its full sequence is Ribosome-recycling factor, mitochondrial (262 aa).

A mitochondrion-targeting transit peptide spans 1–55 (MALGLKCFRMVHPTFRNYLAASIRPVSEVTLKTVHERQHGHRQYMAYSAVPVRHF).

It belongs to the RRF family.

It is found in the mitochondrion. Responsible for the disassembly of ribosomes from messenger RNA at the termination of mitochondrial protein biosynthesis. Acts in collaboration with GFM2. Promotes mitochondrial ribosome recycling by dissolution of intersubunit contacts. This Homo sapiens (Human) protein is Ribosome-recycling factor, mitochondrial.